The primary structure comprises 201 residues: Recombination protein RecR (201 aa).

A C4-type zinc finger spans residues 60-75 (CKSCGNIDTRNPCTVC). A Toprim domain is found at 83–178 (SIIVVVADVA…KVTRLAHGVP (96 aa)).

It belongs to the RecR family.

In terms of biological role, may play a role in DNA repair. It seems to be involved in an RecBC-independent recombinational process of DNA repair. It may act with RecF and RecO. The protein is Recombination protein RecR of Rhodopseudomonas palustris (strain BisB5).